The following is a 273-amino-acid chain: Tryptase-2 (273 aa).

Positions 1–18 (MLHLLALALLLSLVSAAP) are cleaved as a signal peptide. A propeptide spans 19–28 (APGQALQRSG) (activation peptide). Positions 29 to 270 (IIGGKEAPGS…YLDWIHQYVP (242 aa)) constitute a Peptidase S1 domain. Cys-57 and Cys-73 are disulfide-bonded. Residues His-72 and Asp-119 each act as charge relay system in the active site. Intrachain disulfides connect Cys-153–Cys-228, Cys-186–Cys-209, and Cys-218–Cys-246. Ser-222 acts as the Charge relay system in catalysis. Asn-231 carries an N-linked (GlcNAc...) asparagine glycan.

It belongs to the peptidase S1 family. Tryptase subfamily. Homotetramer.

Its subcellular location is the secreted. The catalysed reaction is Preferential cleavage: Arg-|-Xaa, Lys-|-Xaa, but with more restricted specificity than trypsin.. Tryptase is the major neutral protease present in mast cells and is secreted upon the coupled activation-degranulation response of this cell type. The chain is Tryptase-2 from Ovis aries (Sheep).